Consider the following 111-residue polypeptide: Nucleoid-associated protein Teth39_2199 (111 aa).

It belongs to the YbaB/EbfC family. In terms of assembly, homodimer.

Its subcellular location is the cytoplasm. It localises to the nucleoid. Its function is as follows. Binds to DNA and alters its conformation. May be involved in regulation of gene expression, nucleoid organization and DNA protection. The protein is Nucleoid-associated protein Teth39_2199 of Thermoanaerobacter pseudethanolicus (strain ATCC 33223 / 39E) (Clostridium thermohydrosulfuricum).